We begin with the raw amino-acid sequence, 194 residues long: Imidazoleglycerol-phosphate dehydratase (194 aa).

The protein belongs to the imidazoleglycerol-phosphate dehydratase family.

The protein resides in the cytoplasm. It catalyses the reaction D-erythro-1-(imidazol-4-yl)glycerol 3-phosphate = 3-(imidazol-4-yl)-2-oxopropyl phosphate + H2O. Its pathway is amino-acid biosynthesis; L-histidine biosynthesis; L-histidine from 5-phospho-alpha-D-ribose 1-diphosphate: step 6/9. In Bacillus cereus (strain AH820), this protein is Imidazoleglycerol-phosphate dehydratase.